We begin with the raw amino-acid sequence, 295 residues long: Acetylglutamate kinase (295 aa).

Substrate-binding positions include 66-67 (GG), arginine 88, and asparagine 193.

Belongs to the acetylglutamate kinase family. ArgB subfamily.

The protein localises to the cytoplasm. It catalyses the reaction N-acetyl-L-glutamate + ATP = N-acetyl-L-glutamyl 5-phosphate + ADP. It functions in the pathway amino-acid biosynthesis; L-arginine biosynthesis; N(2)-acetyl-L-ornithine from L-glutamate: step 2/4. Its function is as follows. Catalyzes the ATP-dependent phosphorylation of N-acetyl-L-glutamate. This Rhizobium rhizogenes (strain K84 / ATCC BAA-868) (Agrobacterium radiobacter) protein is Acetylglutamate kinase.